Here is a 581-residue protein sequence, read N- to C-terminus: Proline--tRNA ligase (581 aa).

It belongs to the class-II aminoacyl-tRNA synthetase family. ProS type 1 subfamily. As to quaternary structure, homodimer.

It localises to the cytoplasm. The catalysed reaction is tRNA(Pro) + L-proline + ATP = L-prolyl-tRNA(Pro) + AMP + diphosphate. Its function is as follows. Catalyzes the attachment of proline to tRNA(Pro) in a two-step reaction: proline is first activated by ATP to form Pro-AMP and then transferred to the acceptor end of tRNA(Pro). As ProRS can inadvertently accommodate and process non-cognate amino acids such as alanine and cysteine, to avoid such errors it has two additional distinct editing activities against alanine. One activity is designated as 'pretransfer' editing and involves the tRNA(Pro)-independent hydrolysis of activated Ala-AMP. The other activity is designated 'posttransfer' editing and involves deacylation of mischarged Ala-tRNA(Pro). The misacylated Cys-tRNA(Pro) is not edited by ProRS. This chain is Proline--tRNA ligase, found in Paracidovorax citrulli (strain AAC00-1) (Acidovorax citrulli).